The primary structure comprises 632 residues: Pentatricopeptide repeat-containing protein ELI1, chloroplastic (632 aa).

The N-terminal 19 residues, 1–19, are a transit peptide targeting the chloroplast; it reads MASSPLLATSLPQNQLSTT. 10 PPR repeats span residues 94-128, 129-159, 160-194, 196-221, 222-256, 258-292, 293-323, 324-354, 360-395, and 396-426; these read DLFL…EINP, NEFT…GLGI, DPYV…SLVS, TAMI…MCER, DIVS…GKPK, DEIT…RIRL, NVKV…TPRK, DIVA…MQGI, TDIT…GIKP, and KIEH…MNMD. The segment at 431-506 is type E motif; sequence LWSSVLGSCK…EPGISTIEIE (76 aa). Positions 497–512 are required for function in RNA editing; that stretch reads EPGISTIEIENKVHEF. Positions 507–537 are type E(+) motif; the sequence is NKVHEFRAGDREHSKSKEIYTMLRKISERIK. The segment at 538-632 is type DYW motif; it reads SHGYVPNTNT…DGSCSCGDFW (95 aa).

This sequence belongs to the PPR family. PCMP-H subfamily. Requires Zn(2+) as cofactor.

It is found in the plastid. The protein localises to the chloroplast. In terms of biological role, plays a major role in single RNA editing events in chloroplasts. Acts as a site-recognition transacting factor involved in the edition of the site 5 of ndhB1 and ndhB2 (ndhB1-5 and ndhB2-5 sites corresponding to cytidine-830), which are plastid-encoded subunits of the NADH-plastoquinone oxidoreductase. May provide the catalytic activity for editing site conversion. In Arabidopsis thaliana (Mouse-ear cress), this protein is Pentatricopeptide repeat-containing protein ELI1, chloroplastic.